Consider the following 117-residue polypeptide: Prefoldin subunit beta (117 aa).

Belongs to the prefoldin subunit beta family. As to quaternary structure, heterohexamer of two alpha and four beta subunits.

It is found in the cytoplasm. In terms of biological role, molecular chaperone capable of stabilizing a range of proteins. Seems to fulfill an ATP-independent, HSP70-like function in archaeal de novo protein folding. This is Prefoldin subunit beta from Pyrococcus furiosus (strain ATCC 43587 / DSM 3638 / JCM 8422 / Vc1).